Here is a 506-residue protein sequence, read N- to C-terminus: Sugar transport protein 5 (506 aa).

At Met1–Lys19 the chain is on the cytoplasmic side. A run of 12 helical transmembrane segments spans residues Ile20–Tyr40, Leu81–Ser101, Gly117–Ile137, Ile141–Val161, Gly168–Ile188, Ile201–Ser221, Leu287–Phe307, Ile325–Ile345, Phe352–Leu372, Val390–Leu410, Leu430–Leu450, and Gly456–Leu476. The Cytoplasmic portion of the chain corresponds to Pro477–Thr506.

It belongs to the major facilitator superfamily. Sugar transporter (TC 2.A.1.1) family.

It is found in the membrane. Its function is as follows. Mediates an active uptake of hexoses, probably by sugar/hydrogen symport. The protein is Sugar transport protein 5 (STP5) of Arabidopsis thaliana (Mouse-ear cress).